The sequence spans 206 residues: Anti-sigma-W factor RsiW (206 aa).

Residues 1 to 87 (MSCPEHIVQL…ASINRWLKAH (87 aa)) are Cytoplasmic-facing. Residues histidine 30, cysteine 34, and cysteine 37 each coordinate Zn(2+). The helical transmembrane segment at 88-108 (PFLVAAALFAILMGGSFFSSW) threads the bilayer. Topologically, residues 109-206 (KNDHDFSVSS…SVFGVKESKE (98 aa)) are extracellular.

It belongs to the zinc-associated anti-sigma factor (ZAS) superfamily. Anti-sigma-W factor family. Zn(2+) serves as cofactor. Is processed by three successive proteolytic events. First, the extracellular region of RsiW is cleaved by PrsW (Site-1 cleavage) in response to cell envelope stresses. Next, it undergoes cleavage at an intramembrane site (Site-2 cleavage) mediated by RasP. This cleavage uncovers a cryptic proteolytic tag with conserved alanine residues in the transmembrane segment, that is recognized mainly by the ClpXP protease, which completely degrades the protein in the cytoplasm and leads to the induction of the sigma-W-controlled genes.

It localises to the membrane. In terms of biological role, is the anti-sigma factor for SigW. The presence of RsiW leads to the inactivation of SigW, and its proteolytic destruction to sigma-W activation. In Bacillus licheniformis (strain ATCC 14580 / DSM 13 / JCM 2505 / CCUG 7422 / NBRC 12200 / NCIMB 9375 / NCTC 10341 / NRRL NRS-1264 / Gibson 46), this protein is Anti-sigma-W factor RsiW (rsiW).